The primary structure comprises 185 residues: ATP synthase subunit b, chloroplastic (185 aa).

A helical membrane pass occupies residues leucine 31–leucine 49.

The protein belongs to the ATPase B chain family. F-type ATPases have 2 components, F(1) - the catalytic core - and F(0) - the membrane proton channel. F(1) has five subunits: alpha(3), beta(3), gamma(1), delta(1), epsilon(1). F(0) has four main subunits: a(1), b(1), b'(1) and c(10-14). The alpha and beta chains form an alternating ring which encloses part of the gamma chain. F(1) is attached to F(0) by a central stalk formed by the gamma and epsilon chains, while a peripheral stalk is formed by the delta, b and b' chains.

The protein localises to the plastid. It localises to the chloroplast thylakoid membrane. In terms of biological role, f(1)F(0) ATP synthase produces ATP from ADP in the presence of a proton or sodium gradient. F-type ATPases consist of two structural domains, F(1) containing the extramembraneous catalytic core and F(0) containing the membrane proton channel, linked together by a central stalk and a peripheral stalk. During catalysis, ATP synthesis in the catalytic domain of F(1) is coupled via a rotary mechanism of the central stalk subunits to proton translocation. Component of the F(0) channel, it forms part of the peripheral stalk, linking F(1) to F(0). This is ATP synthase subunit b, chloroplastic from Huperzia lucidula (Shining clubmoss).